Here is a 205-residue protein sequence, read N- to C-terminus: Golgi apparatus membrane protein TVP23 homolog B (205 aa).

Residue Met1 is modified to N-acetylmethionine. The interval 1–21 is disordered; the sequence is MLQQDSNDDTEDVSLFDAEEE. The next 4 helical transmembrane spans lie at 34 to 53, 54 to 72, 126 to 146, and 152 to 172; these read PVAS…VYLL, CELL…ILLL, IFWL…FSAL, and KWLA…YGYI.

The protein belongs to the TVP23 family.

It localises to the membrane. This chain is Golgi apparatus membrane protein TVP23 homolog B (TVP23B), found in Pongo abelii (Sumatran orangutan).